Here is a 158-residue protein sequence, read N- to C-terminus: F(420)H(2) dehydrogenase subunit C (158 aa).

This sequence belongs to the complex I 30 kDa subunit family. In terms of assembly, the FPO complex is composed of at least 13 different subunits.

It localises to the cell membrane. It catalyses the reaction methanophenazine + reduced coenzyme F420-(gamma-L-Glu)(n) = dihydromethanophenazine + oxidized coenzyme F420-(gamma-L-Glu)(n) + H(+). In terms of biological role, component of the F(420)H(2) dehydrogenase (FPO complex) which is part of the energy-conserving F(420)H(2):heterodisulfide oxidoreductase system. The membrane-bound electron transfer system of the complex plays an important role in the metabolism of methylotrophic methanogens when the organisms grow on methanol or methylamines. Catalyzes the oxidation of methanophenazine to dihydromethanophenazine. It shuttles electrons from F(420)H(2), via FAD and iron-sulfur (Fe-S) centers, to methanophenazine (an electron carrier in the membrane). It couples the redox reaction to proton translocation (for every two electrons transferred, two hydrogen ions are translocated across the cytoplasmic membrane), and thus conserves the redox energy in a proton gradient. It also catalyzes the oxidation of F(420)H(2) with quinones such as 2,3-dimethyl-1,4-naphthoquinone, 2-methyl-1,4-naphthoquinone and tetramethyl-p-benzoquinone. This chain is F(420)H(2) dehydrogenase subunit C (fpoC), found in Methanosarcina mazei (strain ATCC BAA-159 / DSM 3647 / Goe1 / Go1 / JCM 11833 / OCM 88) (Methanosarcina frisia).